Consider the following 371-residue polypeptide: Chorismate synthase (371 aa).

Arg48 and Arg54 together coordinate NADP(+). Residues 132-134, 244-245, Gly289, 304-308, and Arg330 each bind FMN; these read RSS, NA, and KPTSS.

This sequence belongs to the chorismate synthase family. In terms of assembly, homotetramer. FMNH2 is required as a cofactor.

It carries out the reaction 5-O-(1-carboxyvinyl)-3-phosphoshikimate = chorismate + phosphate. The protein operates within metabolic intermediate biosynthesis; chorismate biosynthesis; chorismate from D-erythrose 4-phosphate and phosphoenolpyruvate: step 7/7. Its function is as follows. Catalyzes the anti-1,4-elimination of the C-3 phosphate and the C-6 proR hydrogen from 5-enolpyruvylshikimate-3-phosphate (EPSP) to yield chorismate, which is the branch point compound that serves as the starting substrate for the three terminal pathways of aromatic amino acid biosynthesis. This reaction introduces a second double bond into the aromatic ring system. This is Chorismate synthase from Methylobacterium nodulans (strain LMG 21967 / CNCM I-2342 / ORS 2060).